The primary structure comprises 227 residues: Orotate phosphoribosyltransferase 2 (227 aa).

41–42 (FF) provides a ligand contact to orotate. 5-phospho-alpha-D-ribose 1-diphosphate contacts are provided by residues 79 to 80 (YK), arginine 109, lysine 110, lysine 113, histidine 115, and 135 to 143 (DDVMTAGTA). Threonine 139 and arginine 167 together coordinate orotate.

It belongs to the purine/pyrimidine phosphoribosyltransferase family. PyrE subfamily. Homodimer.

The enzyme catalyses orotidine 5'-phosphate + diphosphate = orotate + 5-phospho-alpha-D-ribose 1-diphosphate. It participates in pyrimidine metabolism; UMP biosynthesis via de novo pathway; UMP from orotate: step 1/2. In terms of biological role, catalyzes the transfer of a ribosyl phosphate group from 5-phosphoribose 1-diphosphate to orotate, leading to the formation of orotidine monophosphate (OMP). The protein is Orotate phosphoribosyltransferase 2 (URA10) of Saccharomyces cerevisiae (strain ATCC 204508 / S288c) (Baker's yeast).